Here is a 201-residue protein sequence, read N- to C-terminus: MSFSPSFDALVQALTCLSGVGKKTAQRMALDLLLKKNAEAATLAKALTTALATVQRCRYCRNLSDAEVCLLCADPLRNRQQICVVETPADVIAIEQATDYRGLFFVLMGHIAPLDGMGPEALGMDILDDRLANEAISELVLATNATLEGETTAYFLAELAAKHGIQATRLAYGVPLGSELSYIDKQTLHHAFQSRDHYHEL.

The segment at 57–72 (CRYCRNLSDAEVCLLC) adopts a C4-type zinc-finger fold. One can recognise a Toprim domain in the interval 80–175 (QQICVVETPA…QATRLAYGVP (96 aa)).

It belongs to the RecR family.

Its function is as follows. May play a role in DNA repair. It seems to be involved in an RecBC-independent recombinational process of DNA repair. It may act with RecF and RecO. The protein is Recombination protein RecR of Dichelobacter nodosus (strain VCS1703A).